A 1197-amino-acid chain; its full sequence is ATP-dependent helicase/nuclease subunit A (1197 aa).

The 457-residue stretch at 2–458 (RQWTKEQQAA…IDLAKNFRSR (457 aa)) folds into the UvrD-like helicase ATP-binding domain. Residue 23-30 (AAAGSGKT) participates in ATP binding. Residues 485-774 (RAALYQGTEF…RIMSIHKSKG (290 aa)) enclose the UvrD-like helicase C-terminal domain.

Belongs to the helicase family. AddA subfamily. Heterodimer of AddA and AddB/RexB. Mg(2+) is required as a cofactor.

The enzyme catalyses Couples ATP hydrolysis with the unwinding of duplex DNA by translocating in the 3'-5' direction.. The catalysed reaction is ATP + H2O = ADP + phosphate + H(+). In terms of biological role, the heterodimer acts as both an ATP-dependent DNA helicase and an ATP-dependent, dual-direction single-stranded exonuclease. Recognizes the chi site generating a DNA molecule suitable for the initiation of homologous recombination. The AddA nuclease domain is required for chi fragment generation; this subunit has the helicase and 3' -&gt; 5' nuclease activities. The chain is ATP-dependent helicase/nuclease subunit A from Alkaliphilus oremlandii (strain OhILAs) (Clostridium oremlandii (strain OhILAs)).